We begin with the raw amino-acid sequence, 101 residues long: Thioredoxin 1 (101 aa).

The Thioredoxin domain maps to 2-101 (AQTLDDLIRT…MRQEVLKAIG (100 aa)). Cysteine 25 and cysteine 28 are disulfide-bonded.

This sequence belongs to the thioredoxin family.

In terms of biological role, participates in various redox reactions through the reversible oxidation of its active center dithiol to a disulfide and catalyzes dithiol-disulfide exchange reactions. This is Thioredoxin 1 (trx1) from Chlorobaculum tepidum (strain ATCC 49652 / DSM 12025 / NBRC 103806 / TLS) (Chlorobium tepidum).